The chain runs to 559 residues: NXPE family member 3 (559 aa).

The signal sequence occupies residues M1–V30. Residues N26, N237, and N346 are each glycosylated (N-linked (GlcNAc...) asparagine).

This sequence belongs to the NXPE family.

The protein localises to the secreted. This chain is NXPE family member 3 (NXPE3), found in Bos taurus (Bovine).